Here is a 91-residue protein sequence, read N- to C-terminus: DNA-directed RNA polymerase subunit omega (91 aa).

It belongs to the RNA polymerase subunit omega family. In terms of assembly, the RNAP catalytic core consists of 2 alpha, 1 beta, 1 beta' and 1 omega subunit. When a sigma factor is associated with the core the holoenzyme is formed, which can initiate transcription.

The catalysed reaction is RNA(n) + a ribonucleoside 5'-triphosphate = RNA(n+1) + diphosphate. Its function is as follows. Promotes RNA polymerase assembly. Latches the N- and C-terminal regions of the beta' subunit thereby facilitating its interaction with the beta and alpha subunits. In Photorhabdus laumondii subsp. laumondii (strain DSM 15139 / CIP 105565 / TT01) (Photorhabdus luminescens subsp. laumondii), this protein is DNA-directed RNA polymerase subunit omega.